Consider the following 213-residue polypeptide: HTH-type transcriptional regulator SrpR (213 aa).

The HTH tetR-type domain occupies 10 to 70 (EETRQRIIDA…AVLASRQHPL (61 aa)). The segment at residues 33–52 (TLDQIARKAGVTRGAVYWHF) is a DNA-binding region (H-T-H motif).

Its function is as follows. In conjunction with SrpS represses the srpABC operon. The chain is HTH-type transcriptional regulator SrpR (srpR) from Pseudomonas putida (Arthrobacter siderocapsulatus).